Here is a 204-residue protein sequence, read N- to C-terminus: Casparian strip membrane protein 2 (204 aa).

Topologically, residues 1 to 42 (MKNESTTIDVPAESSSAMKGKAPLIGVARDHTTSGSGGYNRG) are cytoplasmic. The helical transmembrane segment at 43-63 (LSIFDFLLRLAAIVAALAAAA) threads the bilayer. The Extracellular portion of the chain corresponds to 64 to 92 (TMGTSDETLPFFTQFLQFEASYDDLPTFQ). The chain crosses the membrane as a helical span at residues 93–113 (FFVIAMALVGGYLVLSLPISV). The Cytoplasmic portion of the chain corresponds to 114 to 125 (VTILRPLATAPR). The helical transmembrane segment at 126–146 (LLLLVLDTAVLALNTAAASSA) threads the bilayer. Topologically, residues 147–178 (AAISYLAHSGNQNTNWLPICQQFGDFCQKSSG) are extracellular. The helical transmembrane segment at 179 to 199 (AVVSAFISVVFFTILVVISGV) threads the bilayer. The Cytoplasmic segment spans residues 200–204 (ALKRH).

This sequence belongs to the Casparian strip membrane proteins (CASP) family. In terms of assembly, homodimer and heterodimers.

The protein resides in the cell membrane. Its function is as follows. Regulates membrane-cell wall junctions and localized cell wall deposition. Required for establishment of the Casparian strip membrane domain (CSD) and the subsequent formation of Casparian strips, a cell wall modification of the root endodermis that determines an apoplastic barrier between the intraorganismal apoplasm and the extraorganismal apoplasm and prevents lateral diffusion. The polypeptide is Casparian strip membrane protein 2 (Arabidopsis lyrata subsp. lyrata (Lyre-leaved rock-cress)).